Consider the following 303-residue polypeptide: BAG family molecular chaperone regulator 3 (303 aa).

Residues 1–11 are compositionally biased toward polar residues; that stretch reads MMKMNTGTSPS. Residues 1-27 are disordered; the sequence is MMKMNTGTSPSVIGGGTSGNEWESRPG. The region spanning 45–119 is the Ubiquitin-like domain; sequence FRVRVKYGSV…LVVKEDPISQ (75 aa). One can recognise a BAG domain in the interval 138–216; it reads SISDISFEVD…KYVEALDLLK (79 aa). A disordered region spans residues 249-268; the sequence is VEEEEEEPRNSNASSSSGTP. The segment covering 258–267 has biased composition (polar residues); sequence NSNASSSSGT. At S263 the chain carries Phosphoserine.

As to quaternary structure, binds to the ATPase domain of HSP70/HSC70 chaperones. Interacts with HSP70-1.

Its function is as follows. Co-chaperone that regulates diverse cellular pathways, such as programmed cell death and stress responses. This Arabidopsis thaliana (Mouse-ear cress) protein is BAG family molecular chaperone regulator 3 (BAG3).